We begin with the raw amino-acid sequence, 287 residues long: Lycopene elongase/hydratase (287 aa).

7 helical membrane-spanning segments follow: residues 15–35, 37–57, 87–107, 137–157, 166–186, 218–238, and 265–285; these read ISWI…AGEI, WLFW…MYGI, TLLW…FIFG, FIDA…GATI, MWIA…LGAV, LLAA…GIAI, and VFLW…IAIH.

It belongs to the UbiA prenyltransferase family.

The protein resides in the cell membrane. The enzyme catalyses all-trans-lycopene + dimethylallyl diphosphate + A + H2O = nonaflavuxanthin + AH2 + diphosphate. It catalyses the reaction nonaflavuxanthin + dimethylallyl diphosphate + A + H2O = flavuxanthin + AH2 + diphosphate. It participates in carotenoid biosynthesis. In terms of biological role, catalyzes the elongation of the C(40) carotenoid all-trans-lycopene to the acyclic C(50) carotenoid flavuxanthin during decaprenoxanthin biosynthesis. Acts as a bifunctional enzyme that catalyzes the elongation of lycopene by attaching a C(5) isoprene unit at C-2, as well as the hydroxylation of the new isoprene unit. The enzyme acts at both ends of the substrate, forming the C(50) carotenoid flavuxanthin via the C(45) intermediate nonaflavuxanthin. The sequence is that of Lycopene elongase/hydratase from Corynebacterium glutamicum (strain ATCC 13032 / DSM 20300 / JCM 1318 / BCRC 11384 / CCUG 27702 / LMG 3730 / NBRC 12168 / NCIMB 10025 / NRRL B-2784 / 534).